A 555-amino-acid polypeptide reads, in one-letter code: Protein NRT1/ PTR FAMILY 2.1 (555 aa).

Transmembrane regions (helical) follow at residues 32–52, 68–88, 91–111, 127–147, 175–195, 205–225, 324–344, 369–389, 401–421, 437–457, 476–496, and 517–537; these read TLLGISVTSYGWVLNLIVFLI, IVNGCLSMLPVVTAILADSFF, IPVISASAFISLLGIFLLTLI, ILCQSPSKLHLGVLYAALALV, FFNWYFLTVNTGAIISATAIV, LGFGLCAAANLISFIVFISGK, VLPLWLAILFVGTSIGVQASM, VIVLISSCVFLVLNNWTIYPI, LQQVGIGQVFNILSMAISAIV, VLWLLPPLVIVGIGDAFHYMA, SVTSVAFGISFYLSTALINLI, and WVLVIGGVLNLGYFFVCSWYF.

The protein belongs to the major facilitator superfamily. Proton-dependent oligopeptide transporter (POT/PTR) (TC 2.A.17) family. In terms of tissue distribution, expressed in roots.

It is found in the membrane. In terms of biological role, transporter involved in a passive nitrate efflux. This chain is Protein NRT1/ PTR FAMILY 2.1 (NPF2.1), found in Arabidopsis thaliana (Mouse-ear cress).